The primary structure comprises 289 residues: tRNA pseudouridine synthase B (289 aa).

Catalysis depends on Asp-38, which acts as the Nucleophile.

It belongs to the pseudouridine synthase TruB family. Type 1 subfamily.

The catalysed reaction is uridine(55) in tRNA = pseudouridine(55) in tRNA. In terms of biological role, responsible for synthesis of pseudouridine from uracil-55 in the psi GC loop of transfer RNAs. The sequence is that of tRNA pseudouridine synthase B from Clostridium tetani (strain Massachusetts / E88).